Reading from the N-terminus, the 102-residue chain is RNA-binding protein Hfq (102 aa).

The Sm domain maps to 9 to 68 (DPFLNALRRERVPVSIYLVNGIKLQGQIESFDQFVILLKNTVSQMVYKHAISTVVPSRPV). The interval 63–102 (VPSRPVSHHSNNAGGGTSSNYHHGSSAQNTSAQQDSEETE) is disordered. The span at 70 to 96 (HHSNNAGGGTSSNYHHGSSAQNTSAQQ) shows a compositional bias: polar residues.

Belongs to the Hfq family. Homohexamer.

RNA chaperone that binds small regulatory RNA (sRNAs) and mRNAs to facilitate mRNA translational regulation in response to envelope stress, environmental stress and changes in metabolite concentrations. Also binds with high specificity to tRNAs. The polypeptide is RNA-binding protein Hfq (Escherichia fergusonii (strain ATCC 35469 / DSM 13698 / CCUG 18766 / IAM 14443 / JCM 21226 / LMG 7866 / NBRC 102419 / NCTC 12128 / CDC 0568-73)).